We begin with the raw amino-acid sequence, 501 residues long: Galactokinase (501 aa).

Residues R54, E60, H61, and D63 each coordinate alpha-D-galactose. G158, G160, S162, and S163 together coordinate ATP. Residue D207 coordinates alpha-D-galactose. Residue D207 is the Proton acceptor of the active site. S250 and K252 together coordinate ATP. Y260 provides a ligand contact to alpha-D-galactose.

This sequence belongs to the GHMP kinase family. GalK subfamily.

It catalyses the reaction alpha-D-galactose + ATP = alpha-D-galactose 1-phosphate + ADP + H(+). Its pathway is carbohydrate metabolism; galactose metabolism. The chain is Galactokinase (galK) from Dictyostelium discoideum (Social amoeba).